We begin with the raw amino-acid sequence, 81 residues long: MVSKHIELLLLLEVMRTSSIEHVDEDEGDFNLSILLFAMDNLPSIGRAILNKRTTCMHDVGSKIYCGPKKQRFLLCWSTKL.

This is an uncharacterized protein from Saccharomyces cerevisiae (strain ATCC 204508 / S288c) (Baker's yeast).